Here is a 421-residue protein sequence, read N- to C-terminus: 3-isopropylmalate dehydratase large subunit (421 aa).

[4Fe-4S] cluster is bound by residues cysteine 302, cysteine 362, and cysteine 365.

It belongs to the aconitase/IPM isomerase family. LeuC type 2 subfamily. As to quaternary structure, heterodimer of LeuC and LeuD. [4Fe-4S] cluster is required as a cofactor.

It carries out the reaction (2R,3S)-3-isopropylmalate = (2S)-2-isopropylmalate. It functions in the pathway amino-acid biosynthesis; L-leucine biosynthesis; L-leucine from 3-methyl-2-oxobutanoate: step 2/4. In terms of biological role, catalyzes the isomerization between 2-isopropylmalate and 3-isopropylmalate, via the formation of 2-isopropylmaleate. In Campylobacter curvus (strain 525.92), this protein is 3-isopropylmalate dehydratase large subunit.